Consider the following 257-residue polypeptide: 7-carboxy-7-deazaguanine synthase (257 aa).

Substrate contacts are provided by residues 29–31 and R44; that span reads LQG. One can recognise a Radical SAM core domain in the interval 35–253; the sequence is LAGTPSVFVR…PRLHVALWND (219 aa). [4Fe-4S] cluster contacts are provided by C48, C52, and C55. Residue S57 participates in Mg(2+) binding. T90 is a substrate binding site. An S-adenosyl-L-methionine-binding site is contributed by G92. The interval 133–153 is disordered; that stretch reads VSPKLASSTPTAETDPKGDGE.

The protein belongs to the radical SAM superfamily. 7-carboxy-7-deazaguanine synthase family. As to quaternary structure, homodimer. Requires [4Fe-4S] cluster as cofactor. S-adenosyl-L-methionine is required as a cofactor. The cofactor is Mg(2+).

The catalysed reaction is 6-carboxy-5,6,7,8-tetrahydropterin + H(+) = 7-carboxy-7-deazaguanine + NH4(+). The protein operates within purine metabolism; 7-cyano-7-deazaguanine biosynthesis. In terms of biological role, catalyzes the complex heterocyclic radical-mediated conversion of 6-carboxy-5,6,7,8-tetrahydropterin (CPH4) to 7-carboxy-7-deazaguanine (CDG), a step common to the biosynthetic pathways of all 7-deazapurine-containing compounds. This is 7-carboxy-7-deazaguanine synthase from Halobacterium salinarum (strain ATCC 29341 / DSM 671 / R1).